The sequence spans 461 residues: Cysteine--tRNA ligase (461 aa).

Residue C28 coordinates Zn(2+). The short motif at 30–40 is the 'HIGH' region element; the sequence is ITVYDLCHIGH. Residues C209, H234, and E238 each coordinate Zn(2+). The 'KMSKS' region motif lies at 266–270; it reads KMSKS. K269 is a binding site for ATP.

The protein belongs to the class-I aminoacyl-tRNA synthetase family. Monomer. The cofactor is Zn(2+).

It is found in the cytoplasm. The catalysed reaction is tRNA(Cys) + L-cysteine + ATP = L-cysteinyl-tRNA(Cys) + AMP + diphosphate. The chain is Cysteine--tRNA ligase from Shigella flexneri.